A 489-amino-acid chain; its full sequence is Glycogen synthase (489 aa).

Position 15 (lysine 15) interacts with ADP-alpha-D-glucose.

It belongs to the glycosyltransferase 1 family. Bacterial/plant glycogen synthase subfamily.

The catalysed reaction is [(1-&gt;4)-alpha-D-glucosyl](n) + ADP-alpha-D-glucose = [(1-&gt;4)-alpha-D-glucosyl](n+1) + ADP + H(+). It functions in the pathway glycan biosynthesis; glycogen biosynthesis. In terms of biological role, synthesizes alpha-1,4-glucan chains using ADP-glucose. In Francisella tularensis subsp. mediasiatica (strain FSC147), this protein is Glycogen synthase.